The following is a 101-amino-acid chain: Small ribosomal subunit protein uS14 (101 aa).

This sequence belongs to the universal ribosomal protein uS14 family. As to quaternary structure, part of the 30S ribosomal subunit. Contacts proteins S3 and S10.

Its function is as follows. Binds 16S rRNA, required for the assembly of 30S particles and may also be responsible for determining the conformation of the 16S rRNA at the A site. The chain is Small ribosomal subunit protein uS14 from Vibrio vulnificus (strain CMCP6).